Here is a 1239-residue protein sequence, read N- to C-terminus: Anion exchange protein 2 (1239 aa).

The tract at residues 1–237 is disordered; it reads MSSAPRRPAK…HRSYNLQERR (237 aa). The Cytoplasmic segment spans residues 1 to 706; that stretch reads MSSAPRRPAK…DFRDALDPQC (706 aa). Composition is skewed to basic and acidic residues over residues 37–49 and 58–75; these read ELHR…RFEE and GGEE…EYHR. 2 stretches are compositionally biased toward basic residues: residues 76 to 85 and 94 to 110; these read QSSHHIHHPL and RRRK…RRRP. Phosphoserine occurs at positions 113, 132, 144, 170, and 172. Residues 120–133 show a composition bias toward acidic residues; it reads TIEEGEEDEDEASE. Residues 141–155 show a composition bias toward low complexity; it reads TQPSPVSTPSSVQFF. Positions 189–207 are enriched in low complexity; that stretch reads GAQAGTQVEEAEAVAVASG. Positions 208–217 are enriched in gly residues; that stretch reads TAGGDDGGAS. Ser241 carries the post-translational modification Phosphoserine. Thr255 is modified (phosphothreonine). Lys272 bears the N6-methyllysine mark. The interval 285–318 is disordered; that stretch reads HLVRKNAKGSTQSGREGREPGPTPRARPRAPHKP. Ser441 carries the phosphoserine modification. Positions 447–468 are disordered; sequence SLLGHHHGQGAESDPHVTEPLI. Membrane (anion exchange) stretches follow at residues 706–1239 and 708–1239; these read CLAA…PMPV and AAVI…PMPV. 4 consecutive transmembrane segments (helical) span residues 707 to 727, 752 to 772, 794 to 814, and 824 to 844; these read LAAV…FGGL, FCLL…LLVF, IGFW…SFLV, and IFAF…LVKI. Residues 845–895 lie on the Extracellular side of the membrane; that stretch reads FQEHPLHGCSASNSSEVDGGENMTWAVARPTLGPGNRSLAGQSGQGKPRGQ. 3 N-linked (GlcNAc...) asparagine glycosylation sites follow: Asn857, Asn866, and Asn880. The chain crosses the membrane as a helical span at residues 896-916; that stretch reads PNTALLSLVLMAGTFFIAFFL. Over 917–931 the chain is Cytoplasmic; the sequence is RKFKNSRFFPGRIRR. 5 helical membrane-spanning segments follow: residues 932–952, 987–1007, 1034–1054, 1088–1108, and 1111–1131; these read VIGD…DYSI, FPVW…ILIF, LLLI…WLAA, RVTG…GDLL, and IPLA…LNGI. The S-palmitoyl cysteine moiety is linked to residue Cys1171. Residues 1172 to 1192 form a helical membrane-spanning segment; the sequence is LALLWAVMSTAASLAFPFILI.

The protein belongs to the anion exchanger (TC 2.A.31) family.

Its subcellular location is the apical cell membrane. The protein resides in the basolateral cell membrane. The enzyme catalyses hydrogencarbonate(in) + chloride(out) = hydrogencarbonate(out) + chloride(in). In terms of biological role, sodium-independent anion exchanger which mediates the electroneutral exchange of chloride for bicarbonate ions across the cell membrane. Plays an important role in osteoclast differentiation and function. Regulates bone resorption and calpain-dependent actin cytoskeleton organization in osteoclasts via anion exchange-dependent control of pH. Essential for intracellular pH regulation in CD8(+) T-cells upon CD3 stimulation, modulating CD8(+) T-cell response. In Pongo abelii (Sumatran orangutan), this protein is Anion exchange protein 2 (SLC4A2).